A 405-amino-acid polypeptide reads, in one-letter code: Pentatricopeptide repeat-containing protein At3g14580, mitochondrial (405 aa).

A mitochondrion-targeting transit peptide spans 1-37 (MILRRLVLSATSNSNPRRSQSLSSSGVRILSSSSSDR). Residues 13 to 44 (NSNPRRSQSLSSSGVRILSSSSSDRYTSSSQR) form a disordered region. PPR repeat units follow at residues 94–124 (TESL…IKLE), 130–165 (SEEF…GCWP), 166–200 (SSKS…GVEI), 201–235 (DACC…KSRP), 236–270 (NVMT…RIEP), 271–305 (DTIT…GCEP), 306–340 (NPGT…GMRP), and 341–375 (SFLS…GFVP).

Belongs to the PPR family. P subfamily.

The protein localises to the mitochondrion. This chain is Pentatricopeptide repeat-containing protein At3g14580, mitochondrial, found in Arabidopsis thaliana (Mouse-ear cress).